The following is a 456-amino-acid chain: Bifunctional protein GlmU (456 aa).

The interval methionine 1–arginine 229 is pyrophosphorylase. Residues leucine 8 to glycine 11, lysine 22, glutamine 73, and glycine 78 to threonine 79 each bind UDP-N-acetyl-alpha-D-glucosamine. Aspartate 103 is a Mg(2+) binding site. Glycine 140, glutamate 155, asparagine 170, and asparagine 227 together coordinate UDP-N-acetyl-alpha-D-glucosamine. Asparagine 227 is a binding site for Mg(2+). The interval glycine 230–asparagine 250 is linker. Residues glycine 251 to lysine 456 are N-acetyltransferase. Positions 332 and 350 each coordinate UDP-N-acetyl-alpha-D-glucosamine. Histidine 362 functions as the Proton acceptor in the catalytic mechanism. UDP-N-acetyl-alpha-D-glucosamine contacts are provided by tyrosine 365 and asparagine 376. Residues asparagine 385 to tyrosine 386, alanine 422, and arginine 439 contribute to the acetyl-CoA site.

It in the N-terminal section; belongs to the N-acetylglucosamine-1-phosphate uridyltransferase family. In the C-terminal section; belongs to the transferase hexapeptide repeat family. In terms of assembly, homotrimer. Mg(2+) is required as a cofactor.

The protein resides in the cytoplasm. The enzyme catalyses alpha-D-glucosamine 1-phosphate + acetyl-CoA = N-acetyl-alpha-D-glucosamine 1-phosphate + CoA + H(+). The catalysed reaction is N-acetyl-alpha-D-glucosamine 1-phosphate + UTP + H(+) = UDP-N-acetyl-alpha-D-glucosamine + diphosphate. Its pathway is nucleotide-sugar biosynthesis; UDP-N-acetyl-alpha-D-glucosamine biosynthesis; N-acetyl-alpha-D-glucosamine 1-phosphate from alpha-D-glucosamine 6-phosphate (route II): step 2/2. The protein operates within nucleotide-sugar biosynthesis; UDP-N-acetyl-alpha-D-glucosamine biosynthesis; UDP-N-acetyl-alpha-D-glucosamine from N-acetyl-alpha-D-glucosamine 1-phosphate: step 1/1. It participates in bacterial outer membrane biogenesis; LPS lipid A biosynthesis. In terms of biological role, catalyzes the last two sequential reactions in the de novo biosynthetic pathway for UDP-N-acetylglucosamine (UDP-GlcNAc). The C-terminal domain catalyzes the transfer of acetyl group from acetyl coenzyme A to glucosamine-1-phosphate (GlcN-1-P) to produce N-acetylglucosamine-1-phosphate (GlcNAc-1-P), which is converted into UDP-GlcNAc by the transfer of uridine 5-monophosphate (from uridine 5-triphosphate), a reaction catalyzed by the N-terminal domain. The sequence is that of Bifunctional protein GlmU from Clostridium novyi (strain NT).